The following is a 148-amino-acid chain: Wound-induced proteinase inhibitor 2 (148 aa).

Residues 1 to 25 (MAVHKEVNFVAYLLIVLGMFLYVDA) form the signal peptide. Residues 26–81 (KACTRECGNLGFGICPRSEGSPLNPICINCCSGYKGCNYYNSFGKFICEGESDPKR) form a 1; trypsin-inhibitory repeat. 8 disulfides stabilise this stretch: Cys28–Cys116, Cys32–Cys112, Cys40–Cys122, Cys52–Cys89, Cys55–Cys73, Cys56–Cys85, Cys62–Cys98, and Cys115–Cys133. The stretch at 83-141 (NACTFNCDPNIAYSRCPRSQGKSLIYPTGCTTCCTGYKGCYYFGKDGKFVCEGESDEPK) is one 2; chymotrypsin-inhibitory repeat.

It belongs to the protease inhibitor I20 (potato type II proteinase inhibitor) family.

Its subcellular location is the secreted. In terms of biological role, potent inhibitor of both trypsin and chymotrypsin. In Solanum lycopersicum (Tomato), this protein is Wound-induced proteinase inhibitor 2.